The chain runs to 430 residues: Adenylosuccinate synthetase (430 aa).

GTP contacts are provided by residues 12–18 (GDEGKGK) and 40–42 (GHT). The active-site Proton acceptor is the aspartate 13. Mg(2+)-binding residues include aspartate 13 and glycine 40. IMP contacts are provided by residues 13 to 16 (DEGK), 38 to 41 (NAGH), threonine 129, arginine 143, glutamine 224, threonine 239, and arginine 303. Histidine 41 functions as the Proton donor in the catalytic mechanism. 299-305 (ATTGRRR) is a binding site for substrate. GTP contacts are provided by residues arginine 305, 331 to 333 (KLD), and 413 to 415 (SVG).

It belongs to the adenylosuccinate synthetase family. As to quaternary structure, homodimer. Mg(2+) serves as cofactor.

It is found in the cytoplasm. The enzyme catalyses IMP + L-aspartate + GTP = N(6)-(1,2-dicarboxyethyl)-AMP + GDP + phosphate + 2 H(+). It functions in the pathway purine metabolism; AMP biosynthesis via de novo pathway; AMP from IMP: step 1/2. Functionally, plays an important role in the de novo pathway of purine nucleotide biosynthesis. Catalyzes the first committed step in the biosynthesis of AMP from IMP. In Desulfatibacillum aliphaticivorans, this protein is Adenylosuccinate synthetase.